Reading from the N-terminus, the 335-residue chain is Probable deoxyhypusine synthase (335 aa).

The active-site Nucleophile is lysine 307.

This sequence belongs to the deoxyhypusine synthase family. NAD(+) serves as cofactor.

It carries out the reaction [eIF5A protein]-L-lysine + spermidine = [eIF5A protein]-deoxyhypusine + propane-1,3-diamine. The protein operates within protein modification; eIF5A hypusination. Its function is as follows. Catalyzes the NAD-dependent oxidative cleavage of spermidine and the subsequent transfer of the butylamine moiety of spermidine to the epsilon-amino group of a specific lysine residue of the eIF-5A precursor protein to form the intermediate deoxyhypusine residue. This Pyrococcus abyssi (strain GE5 / Orsay) protein is Probable deoxyhypusine synthase (dys).